The primary structure comprises 1063 residues: Lysine-specific demethylase phf2 (1063 aa).

The PHD-type zinc-finger motif lies at 5–56 (PVYCICRLPYDVTQFMIECDACKDWFHGSCVGVDEDEAPDIDIYHCPNCEKT). Positions 197–353 (FSDARMANIV…MQMRAYEVEK (157 aa)) constitute a JmjC domain. 2-oxoglutarate is bound at residue threonine 246. Positions 249 and 251 each coordinate Fe cation. Positions 259 and 266 each coordinate 2-oxoglutarate. Position 321 (asparagine 321) interacts with Fe cation. Disordered regions lie at residues 448–546 (VSDS…LAAL), 704–761 (NIKE…SAGI), 773–864 (GIDY…DMFD), and 879–1045 (YVYP…MATA). Positions 460 to 477 (SEPSNSKPPAEEPPSALS) are enriched in low complexity. Composition is skewed to basic and acidic residues over residues 513 to 540 (PPKE…EKKP) and 723 to 745 (KSPD…DVKG). Basic residues predominate over residues 746 to 755 (RNSKVSKKKG). Over residues 776–791 (YSNNSQPPASPSTQEA) the composition is skewed to polar residues. Low complexity predominate over residues 813 to 833 (SNSQAKNNSHSSAASKKPSGA). Residues 842 to 852 (RPAKRLPKKTQ) show a composition bias toward basic residues. Residues 920–929 (RQERPAREGA) are compositionally biased toward basic and acidic residues. Positions 953-964 (IKKKKKSAKKKP) are enriched in basic residues. The span at 965-975 (IVAEESHKLSH) shows a compositional bias: basic and acidic residues. 2 stretches are compositionally biased toward low complexity: residues 976–988 (DSSS…DSES) and 1021–1031 (SSSSSSQNASS). A Phosphoserine; by PKA modification is found at serine 1021.

It belongs to the JHDM1 histone demethylase family. JHDM1D subfamily.

It is found in the nucleus. The protein localises to the nucleolus. Its subcellular location is the chromosome. It localises to the centromere. The protein resides in the kinetochore. Functionally, lysine demethylase that demethylates both histones and non-histone proteins. Mediates demethylation of dimethylated 'Lys-9' of histone H3 (H3K9me2). Recruited to trimethylated 'Lys-4' of histone H3 (H3K4me3) at rDNA promoters and promotes expression of rDNA. The polypeptide is Lysine-specific demethylase phf2 (phf2) (Danio rerio (Zebrafish)).